A 464-amino-acid chain; its full sequence is Chromosomal replication initiator protein DnaA (464 aa).

Positions 1–82 (MKNAAELWHN…GSRLDIQFIE (82 aa)) are domain I, interacts with DnaA modulators. The interval 82–125 (EEGQAKHMLDRQNEEVEVMEVAPAKTKAQKTPKSSDELVMSELG) is domain II. The segment at 126-342 (QLNEKYTFDT…GALTRVIAYA (217 aa)) is domain III, AAA+ region. The ATP site is built by Gly-170, Gly-172, Lys-173, and Thr-174. Residues 343–464 (NLVGRTIDPN…EQIKHELKHS (122 aa)) are domain IV, binds dsDNA.

The protein belongs to the DnaA family. As to quaternary structure, oligomerizes as a right-handed, spiral filament on DNA at oriC.

The protein resides in the cytoplasm. Plays an essential role in the initiation and regulation of chromosomal replication. ATP-DnaA binds to the origin of replication (oriC) to initiate formation of the DNA replication initiation complex once per cell cycle. Binds the DnaA box (a 9 base pair repeat at the origin) and separates the double-stranded (ds)DNA. Forms a right-handed helical filament on oriC DNA; dsDNA binds to the exterior of the filament while single-stranded (ss)DNA is stabiized in the filament's interior. The ATP-DnaA-oriC complex binds and stabilizes one strand of the AT-rich DNA unwinding element (DUE), permitting loading of DNA polymerase. After initiation quickly degrades to an ADP-DnaA complex that is not apt for DNA replication. Binds acidic phospholipids. This chain is Chromosomal replication initiator protein DnaA, found in Exiguobacterium sibiricum (strain DSM 17290 / CCUG 55495 / CIP 109462 / JCM 13490 / 255-15).